The sequence spans 435 residues: Probable exopolygalacturonase B (435 aa).

The N-terminal stretch at 1 to 15 (MKFFLATLFASAVSS) is a signal peptide. 3 N-linked (GlcNAc...) asparagine glycosylation sites follow: N59, N184, and N224. 5 PbH1 repeats span residues 208–239 (SKDV…DSLN), 240–261 (VDGL…SPKP), 262–283 (NTTN…SMGS), 294–315 (IEHA…RLKA), and 326–347 (INNI…VLDQ). D254 functions as the Proton donor in the catalytic mechanism. A disulfide bond links C256 and C273. Residues N262 and N274 are each glycosylated (N-linked (GlcNAc...) asparagine). H277 is a catalytic residue. N301, N328, N365, and N373 each carry an N-linked (GlcNAc...) asparagine glycan. Residues 366-388 (VTNILFENISGTSSGKNGKVVAD) form a PbH1 6 repeat. Residues C391 and C397 are joined by a disulfide bond. N406 carries an N-linked (GlcNAc...) asparagine glycan.

It belongs to the glycosyl hydrolase 28 family.

Its subcellular location is the secreted. It catalyses the reaction [(1-&gt;4)-alpha-D-galacturonosyl](n) + H2O = alpha-D-galacturonate + [(1-&gt;4)-alpha-D-galacturonosyl](n-1). In terms of biological role, specific in hydrolyzing the terminal glycosidic bond of polygalacturonic acid and oligogalacturonates. In Aspergillus flavus (strain ATCC 200026 / FGSC A1120 / IAM 13836 / NRRL 3357 / JCM 12722 / SRRC 167), this protein is Probable exopolygalacturonase B (pgxB).